The following is a 328-amino-acid chain: Probable nicotianamine synthase 6 (328 aa).

The protein belongs to the nicotianamine synthase (NAS)-like family.

It catalyses the reaction 3 S-adenosyl-L-methionine = nicotianamine + 3 S-methyl-5'-thioadenosine + 3 H(+). Its function is as follows. Synthesizes nicotianamine, a polyamine that is the first intermediate in the synthesis of the phytosiderophores of the mugineic acid type found in gramineae which serves as a sensor for the physiological iron status within the plant, and/or might be involved in the transport of iron. The sequence is that of Probable nicotianamine synthase 6 (NAS6) from Hordeum vulgare (Barley).